Reading from the N-terminus, the 753-residue chain is Polyribonucleotide nucleotidyltransferase (753 aa).

Mg(2+) contacts are provided by aspartate 488 and aspartate 494. Residues 555-614 (PKLYTMKINPEKIRDVIGKGGSTIRALTEETGTQIDIGEDGTITIASSDAAKADEAKRRI) enclose the KH domain. The region spanning 624-692 (GKIYEGPVTK…EKGRVKLSLK (69 aa)) is the S1 motif domain. Residues 692–753 (KALTERPAGM…EGEQQQQQQQ (62 aa)) are disordered. Positions 699-739 (AGMERSDRPAPAEREFRQPREPRQQREFREPREPREPRDGG) are enriched in basic and acidic residues.

The protein belongs to the polyribonucleotide nucleotidyltransferase family. Mg(2+) is required as a cofactor.

It localises to the cytoplasm. The enzyme catalyses RNA(n+1) + phosphate = RNA(n) + a ribonucleoside 5'-diphosphate. In terms of biological role, involved in mRNA degradation. Catalyzes the phosphorolysis of single-stranded polyribonucleotides processively in the 3'- to 5'-direction. This is Polyribonucleotide nucleotidyltransferase from Delftia acidovorans (strain DSM 14801 / SPH-1).